The following is a 291-amino-acid chain: Serine/threonine-protein phosphatase Pgam5, mitochondrial (291 aa).

Residues 7–23 (FACGTGAGLAAFYLQRL) form a helical membrane-spanning segment. The disordered stretch occupies residues 59–78 (KSLVRPQKNEQPQEQNRYNS). Residues 67–77 (NEQPQEQNRYN) show a composition bias toward polar residues.

It belongs to the phosphoglycerate mutase family. BPG-dependent PGAM subfamily. In terms of assembly, interacts with Pk92B/ASK1.

The protein localises to the mitochondrion outer membrane. The catalysed reaction is O-phospho-L-seryl-[protein] + H2O = L-seryl-[protein] + phosphate. The enzyme catalyses O-phospho-L-threonyl-[protein] + H2O = L-threonyl-[protein] + phosphate. Functionally, displays phosphatase activity for serine/threonine residues, and dephosphorylates and activates Pk92B kinase. Has apparently no phosphoglycerate mutase activity. This Drosophila willistoni (Fruit fly) protein is Serine/threonine-protein phosphatase Pgam5, mitochondrial.